The chain runs to 358 residues: UDP-N-acetylglucosamine--N-acetylmuramyl-(pentapeptide) pyrophosphoryl-undecaprenol N-acetylglucosamine transferase (358 aa).

Positions 196 and 287 each coordinate UDP-N-acetyl-alpha-D-glucosamine.

It belongs to the glycosyltransferase 28 family. MurG subfamily.

The protein localises to the cell membrane. It carries out the reaction Mur2Ac(oyl-L-Ala-gamma-D-Glu-L-Lys-D-Ala-D-Ala)-di-trans,octa-cis-undecaprenyl diphosphate + UDP-N-acetyl-alpha-D-glucosamine = beta-D-GlcNAc-(1-&gt;4)-Mur2Ac(oyl-L-Ala-gamma-D-Glu-L-Lys-D-Ala-D-Ala)-di-trans,octa-cis-undecaprenyl diphosphate + UDP + H(+). It participates in cell wall biogenesis; peptidoglycan biosynthesis. Its function is as follows. Cell wall formation. Catalyzes the transfer of a GlcNAc subunit on undecaprenyl-pyrophosphoryl-MurNAc-pentapeptide (lipid intermediate I) to form undecaprenyl-pyrophosphoryl-MurNAc-(pentapeptide)GlcNAc (lipid intermediate II). The chain is UDP-N-acetylglucosamine--N-acetylmuramyl-(pentapeptide) pyrophosphoryl-undecaprenol N-acetylglucosamine transferase from Streptococcus uberis (strain ATCC BAA-854 / 0140J).